A 151-amino-acid chain; its full sequence is Large ribosomal subunit protein bL9 (151 aa).

It belongs to the bacterial ribosomal protein bL9 family.

Binds to the 23S rRNA. The sequence is that of Large ribosomal subunit protein bL9 from Chloroherpeton thalassium (strain ATCC 35110 / GB-78).